Reading from the N-terminus, the 1184-residue chain is DNA-directed RNA polymerase subunit beta (1184 aa).

A disordered region spans residues 1160-1184; that stretch reads DDDFTNQNDAFNIVQPENAATEKTE.

It belongs to the RNA polymerase beta chain family. In terms of assembly, the RNAP catalytic core consists of 2 alpha, 1 beta, 1 beta' and 1 omega subunit. When a sigma factor is associated with the core the holoenzyme is formed, which can initiate transcription.

The catalysed reaction is RNA(n) + a ribonucleoside 5'-triphosphate = RNA(n+1) + diphosphate. Its function is as follows. DNA-dependent RNA polymerase catalyzes the transcription of DNA into RNA using the four ribonucleoside triphosphates as substrates. This is DNA-directed RNA polymerase subunit beta from Listeria innocua serovar 6a (strain ATCC BAA-680 / CLIP 11262).